We begin with the raw amino-acid sequence, 436 residues long: 3-ketoacyl-CoA thiolase (436 aa).

Catalysis depends on cysteine 99, which acts as the Acyl-thioester intermediate. Residues histidine 392 and cysteine 422 each act as proton acceptor in the active site.

Belongs to the thiolase-like superfamily. Thiolase family. In terms of assembly, heterotetramer of two alpha chains (FadJ) and two beta chains (FadI).

The protein resides in the cytoplasm. It carries out the reaction an acyl-CoA + acetyl-CoA = a 3-oxoacyl-CoA + CoA. The protein operates within lipid metabolism; fatty acid beta-oxidation. Catalyzes the final step of fatty acid oxidation in which acetyl-CoA is released and the CoA ester of a fatty acid two carbons shorter is formed. In Yersinia enterocolitica serotype O:8 / biotype 1B (strain NCTC 13174 / 8081), this protein is 3-ketoacyl-CoA thiolase.